The sequence spans 178 residues: Crossover junction endodeoxyribonuclease RuvC (178 aa).

Active-site residues include D7, E68, and D141. 3 residues coordinate Mg(2+): D7, E68, and D141.

The protein belongs to the RuvC family. In terms of assembly, homodimer which binds Holliday junction (HJ) DNA. The HJ becomes 2-fold symmetrical on binding to RuvC with unstacked arms; it has a different conformation from HJ DNA in complex with RuvA. In the full resolvosome a probable DNA-RuvA(4)-RuvB(12)-RuvC(2) complex forms which resolves the HJ. It depends on Mg(2+) as a cofactor.

The protein localises to the cytoplasm. It catalyses the reaction Endonucleolytic cleavage at a junction such as a reciprocal single-stranded crossover between two homologous DNA duplexes (Holliday junction).. The RuvA-RuvB-RuvC complex processes Holliday junction (HJ) DNA during genetic recombination and DNA repair. Endonuclease that resolves HJ intermediates. Cleaves cruciform DNA by making single-stranded nicks across the HJ at symmetrical positions within the homologous arms, yielding a 5'-phosphate and a 3'-hydroxyl group; requires a central core of homology in the junction. The consensus cleavage sequence is 5'-(A/T)TT(C/G)-3'. Cleavage occurs on the 3'-side of the TT dinucleotide at the point of strand exchange. HJ branch migration catalyzed by RuvA-RuvB allows RuvC to scan DNA until it finds its consensus sequence, where it cleaves and resolves the cruciform DNA. The sequence is that of Crossover junction endodeoxyribonuclease RuvC from Parafrankia sp. (strain EAN1pec).